The primary structure comprises 134 residues: Profilin-2 (134 aa).

Cysteines 13 and 118 form a disulfide. An Involved in PIP2 interaction motif is present at residues 84-100 (AVIRGKKGSGGITIKKT). Residue T114 is modified to Phosphothreonine.

It belongs to the profilin family. Occurs in many kinds of cells as a complex with monomeric actin in a 1:1 ratio. In terms of processing, phosphorylated by MAP kinases.

It localises to the cytoplasm. The protein resides in the cytoskeleton. Its function is as follows. Binds to actin and affects the structure of the cytoskeleton. At high concentrations, profilin prevents the polymerization of actin, whereas it enhances it at low concentrations. This chain is Profilin-2, found in Olea europaea (Common olive).